The chain runs to 489 residues: Netrin-5 (489 aa).

An N-terminal signal peptide occupies residues methionine 1–alanine 16. An N-linked (GlcNAc...) asparagine glycan is attached at asparagine 62. 15 disulfides stabilise this stretch: cysteine 157-cysteine 166, cysteine 159-cysteine 175, cysteine 177-cysteine 186, cysteine 189-cysteine 209, cysteine 212-cysteine 221, cysteine 214-cysteine 239, cysteine 242-cysteine 251, cysteine 254-cysteine 272, cysteine 275-cysteine 287, cysteine 277-cysteine 294, cysteine 296-cysteine 305, cysteine 308-cysteine 322, cysteine 345-cysteine 418, cysteine 349-cysteine 420, and cysteine 364-cysteine 475. 3 consecutive Laminin EGF-like domains span residues cysteine 157–proline 211, cysteine 212–alanine 274, and cysteine 275–arginine 324. In terms of domain architecture, NTR spans cysteine 345 to cysteine 475. Residues glutamate 470–histidine 489 form a disordered region.

Its subcellular location is the secreted. Plays a role in neurogenesis. Prevents motor neuron cell body migration out of the neural tube. This chain is Netrin-5 (NTN5), found in Homo sapiens (Human).